A 471-amino-acid chain; its full sequence is Tetratricopeptide repeat protein 29 (471 aa).

7 TPR repeats span residues 92–131 (DKLP…EAAE), 136–173 (YEEV…AQLI), 182–215 (AEAE…THGR), 234–267 (VRTY…AREG), 274–307 (GEAS…STSL), 314–347 (GRAY…ARNN), and 354–387 (IRAC…AMEL). Positions 449–471 (ATEDNIYQLPDAEEETRRSPENQ) are disordered.

As to expression, expressed in spermatozoa (at protein level).

It localises to the cytoplasm. The protein resides in the cytoskeleton. The protein localises to the flagellum axoneme. Its function is as follows. Axonemal protein which is implicated in axonemal and/or peri-axonemal structure assembly and regulates flagellum assembly and beating and therefore sperm motility. The sequence is that of Tetratricopeptide repeat protein 29 (Ttc29) from Mus musculus (Mouse).